The following is a 563-amino-acid chain: Dihydroxy-acid dehydratase (563 aa).

[2Fe-2S] cluster is bound at residue cysteine 51. Aspartate 83 is a Mg(2+) binding site. Residue cysteine 124 participates in [2Fe-2S] cluster binding. Residues aspartate 125 and lysine 126 each coordinate Mg(2+). Lysine 126 carries the N6-carboxylysine modification. Cysteine 196 is a [2Fe-2S] cluster binding site. A Mg(2+)-binding site is contributed by glutamate 448. Serine 474 functions as the Proton acceptor in the catalytic mechanism.

It belongs to the IlvD/Edd family. In terms of assembly, homodimer. [2Fe-2S] cluster serves as cofactor. Mg(2+) is required as a cofactor.

It carries out the reaction (2R)-2,3-dihydroxy-3-methylbutanoate = 3-methyl-2-oxobutanoate + H2O. It catalyses the reaction (2R,3R)-2,3-dihydroxy-3-methylpentanoate = (S)-3-methyl-2-oxopentanoate + H2O. It functions in the pathway amino-acid biosynthesis; L-isoleucine biosynthesis; L-isoleucine from 2-oxobutanoate: step 3/4. It participates in amino-acid biosynthesis; L-valine biosynthesis; L-valine from pyruvate: step 3/4. Functionally, functions in the biosynthesis of branched-chain amino acids. Catalyzes the dehydration of (2R,3R)-2,3-dihydroxy-3-methylpentanoate (2,3-dihydroxy-3-methylvalerate) into 2-oxo-3-methylpentanoate (2-oxo-3-methylvalerate) and of (2R)-2,3-dihydroxy-3-methylbutanoate (2,3-dihydroxyisovalerate) into 2-oxo-3-methylbutanoate (2-oxoisovalerate), the penultimate precursor to L-isoleucine and L-valine, respectively. The chain is Dihydroxy-acid dehydratase from Polynucleobacter necessarius subsp. necessarius (strain STIR1).